A 591-amino-acid polypeptide reads, in one-letter code: MEASPGDEFEHSPQERDGPEIKEEEQLAPTLQVGNTSLKPDGIQCWDDLWDRREGLGKRQPRDPVPRILGEPRWGQGSNDRAAVCGECGKSFRQMSDLVKHQRTHTGEKPYKCGVCGKGFGDSSARIKHQRTHTGEKAYRVRPPAPGPPKMPRSRIPAGERPTICGECGKSFRQSSDLVKHQRTHTGEKPYKCGICGKGFGDSSARIKHQRTHRGDQLPRPVVPRRQPSPAAPAAPHRPKAQDKPYICTDCGKRFVLSCSLLSHQRSHLGPKPFGCDVCGKEFARGSDLVKHLRVHTGEKPYLCPECGKGFADSSARVKHLRTHSGQRPHACPECNRSFSLSSTLLRHRLTHVEPQDFSLAAYPVVPLIPSPPPPPLGTSPSLTPRSPSHSSDGPFGLPGLEPEPGGPQAGEPPPPLAGDKPHKCPECGKGFRRSSDLVKHHRVHTGEKPYLCPECGKGFADSSARVKHLRTHQGERTRPPPPPSTLLRPHNPPGSVPIVPQSRVQGRPSGPSQLHVCGFCGKEFPRSSDLVKHRRTHTGEKPYKCAECGKGFGDSSARIKHQRGHLALKPFGVGDGPPRPLKEESPAGLE.

Met1 carries the post-translational modification N-acetylmethionine. Disordered regions lie at residues 1-24 and 55-80; these read MEASPGDEFEHSPQERDGPEIKEE and GLGKRQPRDPVPRILGEPRWGQGSND. Basic and acidic residues-rich tracts occupy residues 8–24 and 55–65; these read EFEHSPQERDGPEIKEE and GLGKRQPRDPV. Ser12 carries the phosphoserine modification. Lys58 participates in a covalent cross-link: Glycyl lysine isopeptide (Lys-Gly) (interchain with G-Cter in SUMO2). 2 consecutive C2H2-type zinc fingers follow at residues 83 to 105 and 111 to 133; these read AVCGECGKSFRQMSDLVKHQRTH and YKCGVCGKGFGDSSARIKHQRTH. The tract at residues 131–160 is disordered; it reads RTHTGEKAYRVRPPAPGPPKMPRSRIPAGE. Lys150 is covalently cross-linked (Glycyl lysine isopeptide (Lys-Gly) (interchain with G-Cter in SUMO2)). 2 consecutive C2H2-type zinc fingers follow at residues 163–185 and 191–213; these read TICGECGKSFRQSSDLVKHQRTH and YKCGICGKGFGDSSARIKHQRTH. The disordered stretch occupies residues 206 to 241; sequence RIKHQRTHRGDQLPRPVVPRRQPSPAAPAAPHRPKA. Residues 224-235 show a composition bias toward low complexity; it reads PRRQPSPAAPAA. Lys240 participates in a covalent cross-link: Glycyl lysine isopeptide (Lys-Gly) (interchain with G-Cter in SUMO2). 2 consecutive C2H2-type zinc fingers follow at residues 246-268 and 274-296; these read YICTDCGKRFVLSCSLLSHQRSH and FGCDVCGKEFARGSDLVKHLRVH. A Glycyl lysine isopeptide (Lys-Gly) (interchain with G-Cter in SUMO2) cross-link involves residue Lys300. C2H2-type zinc fingers lie at residues 302–324 and 330–352; these read YLCPECGKGFADSSARVKHLRTH and HACPECNRSFSLSSTLLRHRLTH. Positions 372–429 are disordered; sequence PPPPPLGTSPSLTPRSPSHSSDGPFGLPGLEPEPGGPQAGEPPPPLAGDKPHKCPECG. Residues 379–404 are compositionally biased toward low complexity; sequence TSPSLTPRSPSHSSDGPFGLPGLEPE. Residues 423 to 445 form a C2H2-type 9 zinc finger; it reads HKCPECGKGFRRSSDLVKHHRVH. Lys449 participates in a covalent cross-link: Glycyl lysine isopeptide (Lys-Gly) (interchain with G-Cter in SUMO2). The C2H2-type 10 zinc finger occupies 451 to 473; that stretch reads YLCPECGKGFADSSARVKHLRTH. Positions 464-512 are disordered; that stretch reads SARVKHLRTHQGERTRPPPPPSTLLRPHNPPGSVPIVPQSRVQGRPSGP. Residues 480–496 show a composition bias toward pro residues; sequence PPPPPSTLLRPHNPPGS. 2 C2H2-type zinc fingers span residues 516–538 and 544–566; these read HVCGFCGKEFPRSSDLVKHRRTH and YKCAECGKGFGDSSARIKHQRGH. The disordered stretch occupies residues 564–591; it reads RGHLALKPFGVGDGPPRPLKEESPAGLE. Positions 581–591 are enriched in basic and acidic residues; sequence PLKEESPAGLE. Lys583 is covalently cross-linked (Glycyl lysine isopeptide (Lys-Gly) (interchain with G-Cter in SUMO2)).

This sequence belongs to the krueppel C2H2-type zinc-finger protein family.

Its subcellular location is the nucleus. May be involved in transcriptional regulation. The protein is Zinc finger protein 48 (Znf48) of Mus musculus (Mouse).